A 450-amino-acid chain; its full sequence is Probable rhamnogalacturonase E (450 aa).

An N-terminal signal peptide occupies residues 1–22 (MTWSTSFLSVHFFAFITTSIHA). Cysteines 43 and 69 form a disulfide. Residues Asn-54, Asn-92, and Asn-131 are each glycosylated (N-linked (GlcNAc...) asparagine). The active-site Proton donor is Asp-222. A disulfide bond links Cys-224 and Cys-241. N-linked (GlcNAc...) asparagine glycosylation is found at Asn-242 and Asn-257. His-297 is a catalytic residue. Residues Asn-324 and Asn-329 are each glycosylated (N-linked (GlcNAc...) asparagine). Cystine bridges form between Cys-347–Cys-353 and Cys-375–Cys-384.

The protein belongs to the glycosyl hydrolase 28 family.

The protein resides in the secreted. In terms of biological role, pectinolytic enzymes consist of four classes of enzymes: pectine lyase, polygalacturonase, pectin methylesterase and rhamnogalacturonase. Hydrolyzes alpha-D-galacturonopyranosyl-(1,2)-alpha-L-rhamnopyranosyl linkages in the backbone of the hairy regions of pectins. The protein is Probable rhamnogalacturonase E (rhgE) of Aspergillus niger.